The chain runs to 113 residues: Probable protein L3 (113 aa).

In Bos taurus (Bovine), this protein is Probable protein L3.